We begin with the raw amino-acid sequence, 542 residues long: Cytochrome P450 79B1 (542 aa).

The chain crosses the membrane as a helical span at residues 21–41 (FSNMYLLTTLQAFVAITLVML). Cys478 contacts heme.

It belongs to the cytochrome P450 family. It depends on heme as a cofactor.

The protein resides in the membrane. Functionally, converts tyrosine to para-hydrophenylacetaldoxime in para-hydroxybenzylglucosinolate biosynthesis. This Sinapis alba (White mustard) protein is Cytochrome P450 79B1 (CYP79B1).